The sequence spans 176 residues: 3-hydroxydecanoyl-[acyl-carrier-protein] dehydratase (176 aa).

The active site involves H71.

This sequence belongs to the thioester dehydratase family. FabA subfamily. Homodimer.

It is found in the cytoplasm. The enzyme catalyses a (3R)-hydroxyacyl-[ACP] = a (2E)-enoyl-[ACP] + H2O. It carries out the reaction (3R)-hydroxydecanoyl-[ACP] = (2E)-decenoyl-[ACP] + H2O. The catalysed reaction is (2E)-decenoyl-[ACP] = (3Z)-decenoyl-[ACP]. The protein operates within lipid metabolism; fatty acid biosynthesis. Necessary for the introduction of cis unsaturation into fatty acids. Catalyzes the dehydration of (3R)-3-hydroxydecanoyl-ACP to E-(2)-decenoyl-ACP and then its isomerization to Z-(3)-decenoyl-ACP. Can catalyze the dehydratase reaction for beta-hydroxyacyl-ACPs with saturated chain lengths up to 16:0, being most active on intermediate chain length. The protein is 3-hydroxydecanoyl-[acyl-carrier-protein] dehydratase of Rhodopseudomonas palustris (strain BisA53).